The sequence spans 156 residues: Large ribosomal subunit protein bL17 (156 aa).

A disordered region spans residues 127 to 156 (RATRAAASKKAAEEKAAEAAEEKDEAAEEK). Residues 136–146 (KAAEEKAAEAA) are compositionally biased toward basic and acidic residues. A compositionally biased stretch (acidic residues) spans 147-156 (EEKDEAAEEK).

The protein belongs to the bacterial ribosomal protein bL17 family. Part of the 50S ribosomal subunit. Contacts protein L32.

The polypeptide is Large ribosomal subunit protein bL17 (Corynebacterium urealyticum (strain ATCC 43042 / DSM 7109)).